The primary structure comprises 234 residues: MAIPLLYYPYSSQNHRVNSFEIKGNDEQPRIFSTDSLPTSSEMDEIIWAAYRQIFSEHQILKFNRDTYLESQLRFNQITVREFIRGLLLSERFRILNYDVNNNYRFSEMCVQRVLGRDIYNDKEKIAWSIVLCTRGIKAFVDSLVNSKEYEENFGDNTVPYQKRRVIFQRSKGEVPFNLKTPRYGSDFKERLGMPQYAWQGAIRTFRPQEIKPRPGDPVLYLDMSRELLFSRFR.

The PBS-linker domain maps to 11 to 191 (SSQNHRVNSF…PRYGSDFKER (181 aa)).

The protein belongs to the phycobilisome linker protein family. The phycobilisome is a hemidiscoidal structure that is composed of two distinct substructures: a core complex and a number of rods radiating from the core.

It is found in the plastid. It localises to the chloroplast thylakoid membrane. Rod-core linker protein required for attachment of phycocyanin to allophycocyanin in cores of phycobilisomes. Functionally, linker polypeptides determine the state of aggregation and the location of the disk-shaped phycobiliprotein units within the phycobilisome and modulate their spectroscopic properties in order to mediate a directed and optimal energy transfer. This is Phycobilisome rod-core linker polypeptide cpcG (cpcG) from Cyanidium caldarium (Red alga).